The following is a 358-amino-acid chain: 3-dehydroquinate synthase (358 aa).

Residues 70–75 (DGEQYK), 104–108 (GVVGD), 128–129 (TT), K141, K150, and 168–171 (CLNT) each bind NAD(+). Zn(2+) is bound by residues E183, H246, and H263.

It belongs to the sugar phosphate cyclases superfamily. Dehydroquinate synthase family. Requires Co(2+) as cofactor. Zn(2+) serves as cofactor. NAD(+) is required as a cofactor.

Its subcellular location is the cytoplasm. The catalysed reaction is 7-phospho-2-dehydro-3-deoxy-D-arabino-heptonate = 3-dehydroquinate + phosphate. Its pathway is metabolic intermediate biosynthesis; chorismate biosynthesis; chorismate from D-erythrose 4-phosphate and phosphoenolpyruvate: step 2/7. In terms of biological role, catalyzes the conversion of 3-deoxy-D-arabino-heptulosonate 7-phosphate (DAHP) to dehydroquinate (DHQ). This chain is 3-dehydroquinate synthase, found in Shewanella sediminis (strain HAW-EB3).